We begin with the raw amino-acid sequence, 401 residues long: S-adenosylmethionine synthase (401 aa).

Residue histidine 16 participates in ATP binding. Residue aspartate 18 coordinates Mg(2+). Residue glutamate 44 participates in K(+) binding. L-methionine contacts are provided by glutamate 57 and glutamine 100. The flexible loop stretch occupies residues 100 to 110 (QSPDIAQGVNE). ATP is bound by residues 174 to 176 (DAK), 241 to 242 (RF), aspartate 250, 256 to 257 (RK), alanine 273, and lysine 277. Aspartate 250 provides a ligand contact to L-methionine. An L-methionine-binding site is contributed by lysine 281.

Belongs to the AdoMet synthase family. Homotetramer; dimer of dimers. Mg(2+) serves as cofactor. It depends on K(+) as a cofactor.

The protein resides in the cytoplasm. It carries out the reaction L-methionine + ATP + H2O = S-adenosyl-L-methionine + phosphate + diphosphate. The protein operates within amino-acid biosynthesis; S-adenosyl-L-methionine biosynthesis; S-adenosyl-L-methionine from L-methionine: step 1/1. In terms of biological role, catalyzes the formation of S-adenosylmethionine (AdoMet) from methionine and ATP. The overall synthetic reaction is composed of two sequential steps, AdoMet formation and the subsequent tripolyphosphate hydrolysis which occurs prior to release of AdoMet from the enzyme. This chain is S-adenosylmethionine synthase, found in Streptococcus equi subsp. zooepidemicus (strain MGCS10565).